A 257-amino-acid polypeptide reads, in one-letter code: Thiazole synthase (257 aa).

Lys98 functions as the Schiff-base intermediate with DXP in the catalytic mechanism. 1-deoxy-D-xylulose 5-phosphate is bound by residues Gly159, 185-186 (AG), and 207-208 (NT).

This sequence belongs to the ThiG family. As to quaternary structure, homotetramer. Forms heterodimers with either ThiH or ThiS.

The protein resides in the cytoplasm. It catalyses the reaction [ThiS sulfur-carrier protein]-C-terminal-Gly-aminoethanethioate + 2-iminoacetate + 1-deoxy-D-xylulose 5-phosphate = [ThiS sulfur-carrier protein]-C-terminal Gly-Gly + 2-[(2R,5Z)-2-carboxy-4-methylthiazol-5(2H)-ylidene]ethyl phosphate + 2 H2O + H(+). The protein operates within cofactor biosynthesis; thiamine diphosphate biosynthesis. Its function is as follows. Catalyzes the rearrangement of 1-deoxy-D-xylulose 5-phosphate (DXP) to produce the thiazole phosphate moiety of thiamine. Sulfur is provided by the thiocarboxylate moiety of the carrier protein ThiS. In vitro, sulfur can be provided by H(2)S. The polypeptide is Thiazole synthase (Anaeromyxobacter sp. (strain Fw109-5)).